The chain runs to 353 residues: UPF0283 membrane protein YcjF (353 aa).

Residues 1 to 19 (MSEPLKPRIDFAEPLKEEP) show a composition bias toward basic and acidic residues. Residues 1–48 (MSEPLKPRIDFAEPLKEEPTSAFKAQQTFSEAESHTFAPAAIDERPED) form a disordered region. Topologically, residues 1–69 (MSEPLKPRID…LRPKRSLWRK (69 aa)) are periplasmic. Residues 70 to 90 (MVMGGLALFGASVVGQGVQWT) form a helical membrane-spanning segment. The Cytoplasmic segment spans residues 91-99 (MNAWQTQDW). The chain crosses the membrane as a helical span at residues 100 to 120 (VALGGCAAGALIVGAGVGSVV). The Periplasmic portion of the chain corresponds to 121-212 (TEWWRLWRLR…ARREISRFAA (92 aa)). Residues 213 to 233 (ESTLMIAVSPLALVDMAFIAW) form a helical membrane-spanning segment. At 234 to 353 (RNLRLINRIA…LQKSKSSPEK (120 aa)) the chain is on the cytoplasmic side.

The protein belongs to the UPF0283 family.

The protein resides in the cell inner membrane. This chain is UPF0283 membrane protein YcjF (ycjF), found in Salmonella typhi.